The following is a 568-amino-acid chain: C6 finger domain transcription factor BOA13 (568 aa).

Positions 14–41 form a DNA-binding region, zn(2)-C6 fungal-type; it reads CNECHASKVRCSGERTGCRRCVYNQQKC. Disordered regions lie at residues 92 to 114, 207 to 278, and 467 to 490; these read EANG…EGIT, ATSS…HHNH, and RSRS…FSNP. Basic and acidic residues predominate over residues 242–259; sequence HSDLSEKQAQHAQNDLRW. Over residues 260 to 274 the composition is skewed to polar residues; it reads RSQSQSYKRPTISTQ. Low complexity predominate over residues 470 to 490; sequence SLSTPSPRNTPSTSNSPFSNP.

It is found in the nucleus. Functionally, transcription factor that probably regulates the gene clusters that mediates the biosynthesis of botcinin acid and its botcinin derivatives, acetate-derived polyketides that contribute to virulence when combined with the sesquiterpene botrydial. Botcinin acid and its derivatives have been shown to induce chlorosis and necrosis during host plant infection, but also have antifungal activities. The chain is C6 finger domain transcription factor BOA13 from Botryotinia fuckeliana (strain B05.10) (Noble rot fungus).